Reading from the N-terminus, the 1103-residue chain is PALM2-AKAP2 fusion protein (1103 aa).

2 disordered regions span residues 178–197 (ESAS…KKPP) and 304–396 (YNGT…SSRD). Over residues 179-189 (SASNATETSGP) the composition is skewed to polar residues. Ser-322, Ser-352, and Ser-383 each carry phosphoserine. The segment covering 380 to 392 (VPVSPSSTTSSRC) has biased composition (low complexity). A Glycyl lysine isopeptide (Lys-Gly) (interchain with G-Cter in SUMO1); alternate cross-link involves residue Lys-405. Residue Lys-405 forms a Glycyl lysine isopeptide (Lys-Gly) (interchain with G-Cter in SUMO2); alternate linkage. A coiled-coil region spans residues 444-521 (EEMLELEKER…QKQLQQQQQQ (78 aa)). Disordered stretches follow at residues 483–544 (EQLD…DKAK) and 566–662 (NSRQ…SKLW). The span at 490–505 (LESHKKYKERKERRAQ) shows a compositional bias: basic and acidic residues. The segment covering 506 to 521 (QEQLLLQKQLQQQQQQ) has biased composition (low complexity). Residues 522–531 (PPSQLCTAPA) are compositionally biased toward polar residues. The segment covering 533 to 544 (SHERASMIDKAK) has biased composition (basic and acidic residues). The segment covering 566–579 (NSRQAVAKGQSTPR) has biased composition (polar residues). Phosphoserine is present on residues Ser-567 and Ser-624. Over residues 633–643 (AAGSQGNTASQ) the composition is skewed to polar residues. Ser-692, Ser-696, and Ser-748 each carry phosphoserine. A compositionally biased stretch (polar residues) spans 745–763 (QENSLADFSLPQTPQTDNP). The interval 745–794 (QENSLADFSLPQTPQTDNPSEGRGEGVSKSFSDHGFYSPSSTLGDSPLVD) is disordered. Thr-757 carries the phosphothreonine modification. The tract at residues 797–810 (LEYQAGLLVQNAIQ) is PKA-RII subunit binding domain. Residues 817-829 (VDKAVSKTSRDGA) are compositionally biased toward basic and acidic residues. Positions 817–907 (VDKAVSKTSR…GPINMEETRP (91 aa)) are disordered. Residue Ser-862 is modified to Phosphoserine. Positions 865–886 (QEKRDVLPKILPAEDRALRERG) are enriched in basic and acidic residues. The stretch at 941–979 (KLRSRKQRTLSMIEEEIRAAQEREEELKRQRQVLQSTQS) forms a coiled coil. Residues Ser-951, Ser-979, Ser-1009, and Ser-1016 each carry the phosphoserine modification. The segment at 962–1035 (EREEELKRQR…AAGTQRPKNL (74 aa)) is disordered. The span at 976 to 990 (STQSPRTKNAPSLPS) shows a compositional bias: polar residues.

In terms of tissue distribution, expressed in infantile heart and muscle, and fibroblasts.

It is found in the apical cell membrane. In terms of biological role, binds to regulatory subunit (RII) of protein kinase A. May be involved in establishing polarity in signaling systems or in integrating PKA-RII isoforms with downstream effectors to capture, amplify and focus diffuse, trans-cellular signals carried by cAMP. Binds to and modulates the structure of the actin cytoskeleton. In Homo sapiens (Human), this protein is PALM2-AKAP2 fusion protein.